We begin with the raw amino-acid sequence, 331 residues long: Methionyl-tRNA formyltransferase (331 aa).

A (6S)-5,6,7,8-tetrahydrofolate-binding site is contributed by 110 to 113 (SLLP). The interval 312-331 (HAPAERVSAAGSPAGAGGAP) is disordered.

It belongs to the Fmt family.

The enzyme catalyses L-methionyl-tRNA(fMet) + (6R)-10-formyltetrahydrofolate = N-formyl-L-methionyl-tRNA(fMet) + (6S)-5,6,7,8-tetrahydrofolate + H(+). Functionally, attaches a formyl group to the free amino group of methionyl-tRNA(fMet). The formyl group appears to play a dual role in the initiator identity of N-formylmethionyl-tRNA by promoting its recognition by IF2 and preventing the misappropriation of this tRNA by the elongation apparatus. The polypeptide is Methionyl-tRNA formyltransferase (Frankia alni (strain DSM 45986 / CECT 9034 / ACN14a)).